The sequence spans 242 residues: Caffeoyl-CoA O-methyltransferase 2 (242 aa).

Lysine 16 is a binding site for substrate. S-adenosyl-L-methionine is bound by residues threonine 58, glutamate 80, 82–83 (GV), serine 88, aspartate 106, and alanine 135. Aspartate 158 contacts substrate. Aspartate 158 is a binding site for a divalent metal cation. Aspartate 160 contacts S-adenosyl-L-methionine. Residues aspartate 184 and asparagine 185 each coordinate a divalent metal cation. Asparagine 189 provides a ligand contact to substrate.

This sequence belongs to the class I-like SAM-binding methyltransferase superfamily. Cation-dependent O-methyltransferase family. CCoAMT subfamily. A divalent metal cation is required as a cofactor. Mostly expressed in petal limbs and tubes, and, at low levels, in stems, roots and leaves.

Its subcellular location is the cytoplasm. It is found in the cytosol. It carries out the reaction (E)-caffeoyl-CoA + S-adenosyl-L-methionine = (E)-feruloyl-CoA + S-adenosyl-L-homocysteine + H(+). The enzyme catalyses (E)-5-hydroxyferuloyl-CoA + S-adenosyl-L-methionine = (E)-sinapoyl-CoA + S-adenosyl-L-homocysteine + H(+). Its pathway is aromatic compound metabolism; phenylpropanoid biosynthesis. Involved in the production of floral volatile phenylpropanoids in flowers of fragrant cultivars (e.g. cv. Mitchell and cv. V26) from cinnamic acid, a common precursor with the anthocyanin biosynthesis pathway involved in flower pigmentation. Methylates caffeoyl-CoA to feruloyl-CoA, also able to methylate 5-hydroxyferuloyl-CoA. This is Caffeoyl-CoA O-methyltransferase 2 from Petunia hybrida (Petunia).